A 120-amino-acid polypeptide reads, in one-letter code: Large ribosomal subunit protein bL19 (120 aa).

The protein belongs to the bacterial ribosomal protein bL19 family.

Its function is as follows. This protein is located at the 30S-50S ribosomal subunit interface and may play a role in the structure and function of the aminoacyl-tRNA binding site. This chain is Large ribosomal subunit protein bL19, found in Synechococcus sp. (strain ATCC 27144 / PCC 6301 / SAUG 1402/1) (Anacystis nidulans).